The following is a 382-amino-acid chain: Glutamate 5-kinase (382 aa).

Lys-15 serves as a coordination point for ATP. Substrate contacts are provided by Ser-62, Asp-149, and Asn-161. Thr-181–Asp-182 is an ATP binding site. Residues Arg-288–Ser-366 form the PUA domain.

Belongs to the glutamate 5-kinase family.

It is found in the cytoplasm. It carries out the reaction L-glutamate + ATP = L-glutamyl 5-phosphate + ADP. It functions in the pathway amino-acid biosynthesis; L-proline biosynthesis; L-glutamate 5-semialdehyde from L-glutamate: step 1/2. Its function is as follows. Catalyzes the transfer of a phosphate group to glutamate to form L-glutamate 5-phosphate. The sequence is that of Glutamate 5-kinase from Delftia acidovorans (strain DSM 14801 / SPH-1).